Reading from the N-terminus, the 746-residue chain is Methyl-CpG-binding domain-containing protein 13 (746 aa).

2 consecutive short sequence motifs (nuclear localization signal) follow at residues 13–20 and 44–51; these read ERKVEIRV and IKKLEITN. The MBD domain occupies 29–104; it reads VIVEKSAAQG…KESDIEDDDS (76 aa). 6 disordered regions span residues 131–157, 169–283, 295–328, 348–479, 518–562, and 696–746; these read IDDVRRSKRRNLSSSDEHSKNCKMTSD, LGKK…PTPE, PLDDEPTPELKTRTKVQRVVPPDDEPTPELKTRT, TKVQ…LKSP, TAAG…SGSA, and EPDT…FSKD. Basic and acidic residues predominate over residues 169–180; the sequence is LGKKEEVKDPIE. Residues 190–199 are compositionally biased toward polar residues; the sequence is RSQTKASTTE. Residues 244 to 260 show a composition bias toward basic and acidic residues; the sequence is SSEKRITRSKVEEKKNE. A Nuclear localization signal motif is present at residues 256–263; sequence EKKNELSN. Positions 427 to 451 are enriched in polar residues; it reads VAQSCNEQSSQKPHAAAATSNNRVS. Positions 465-476 are enriched in basic residues; the sequence is VGRKPSKDKKTL. 2 stretches are compositionally biased toward polar residues: residues 529–546 and 702–730; these read PKANLTTSVKPTQISPLR and KSQGMTSTTAATQEAKGRQNNCDYMTNKT. Over residues 732 to 746 the composition is skewed to basic and acidic residues; it reads GKPDDLRFTQSFSKD.

It localises to the nucleus. In terms of biological role, probable transcriptional regulator. This Arabidopsis thaliana (Mouse-ear cress) protein is Methyl-CpG-binding domain-containing protein 13 (MBD13).